A 128-amino-acid polypeptide reads, in one-letter code: Large-conductance mechanosensitive channel (128 aa).

Transmembrane regions (helical) follow at residues 10-30 and 76-96; these read FAMR…SAFG and GLFI…FMMI.

The protein belongs to the MscL family. Homopentamer.

Its subcellular location is the cell inner membrane. Functionally, channel that opens in response to stretch forces in the membrane lipid bilayer. May participate in the regulation of osmotic pressure changes within the cell. The polypeptide is Large-conductance mechanosensitive channel (Haemophilus influenzae (strain PittEE)).